A 325-amino-acid polypeptide reads, in one-letter code: Probable 4-hydroxy-tetrahydrodipicolinate reductase 2, chloroplastic (325 aa).

The transit peptide at 1 to 32 directs the protein to the chloroplast; that stretch reads MLSLRPPCTLSPAPWRRRRTLHGAAGTPQRVS. NAD(+)-binding positions include 57-62, 149-151, and 172-175; these read GCTGKM, GTT, and SPQM. His208 serves as the catalytic Proton donor/acceptor. Catalysis depends on Lys212, which acts as the Proton donor. Position 217–218 (217–218) interacts with (S)-2,3,4,5-tetrahydrodipicolinate; that stretch reads GT.

Belongs to the DapB family.

It is found in the plastid. The protein localises to the chloroplast. The enzyme catalyses (S)-2,3,4,5-tetrahydrodipicolinate + NAD(+) + H2O = (2S,4S)-4-hydroxy-2,3,4,5-tetrahydrodipicolinate + NADH + H(+). It carries out the reaction (S)-2,3,4,5-tetrahydrodipicolinate + NADP(+) + H2O = (2S,4S)-4-hydroxy-2,3,4,5-tetrahydrodipicolinate + NADPH + H(+). The protein operates within amino-acid biosynthesis; L-lysine biosynthesis via DAP pathway; (S)-tetrahydrodipicolinate from L-aspartate: step 4/4. Catalyzes the conversion of 4-hydroxy-tetrahydrodipicolinate (HTPA) to tetrahydrodipicolinate. In Oryza sativa subsp. japonica (Rice), this protein is Probable 4-hydroxy-tetrahydrodipicolinate reductase 2, chloroplastic (DAPB2).